The sequence spans 416 residues: Lipase A (416 aa).

The signal sequence occupies residues 1-32 (MRLAPQKPLLLSTVLHLLLSIWMLGFASLAGA). Intrachain disulfides connect C67–C391 and C177–C180. The N-linked (GlcNAc...) asparagine glycan is linked to N179. The active-site Nucleophile is S219. Catalysis depends on charge relay system residues D287 and H381.

The protein belongs to the AB hydrolase superfamily. Lipase family. In terms of processing, glycosylated.

The protein resides in the secreted. It catalyses the reaction Deacetylation of xylans and xylo-oligosaccharides.. The enzyme catalyses a triacylglycerol + H2O = a diacylglycerol + a fatty acid + H(+). Functionally, lipolytic enzyme that possesses both lipase and acetylxylan esterase activity. Active towards p-nitrophenol esters of various carbon chain length with preference for medium-chain fatty acids (C-8). Also highly active on the acetylated compounds xylose tetra-acetate and oat spelt xylan. This Sodiomyces alcalophilus (Acremonium alcalophilum) protein is Lipase A.